The following is an 837-amino-acid chain: Striatin-interacting protein 1 (837 aa).

Residue Met-1 is modified to N-acetylmethionine. 2 disordered regions span residues 1 to 67 and 333 to 423; these read MEPA…ESPD and AASP…KGLP. The segment covering 18-35 has biased composition (pro residues); that stretch reads PQPPPPPPPAAAQPPPGA. Residues 36-46 show a composition bias toward low complexity; the sequence is PRAAAGLLPGG. Positions 47 to 60 are enriched in basic and acidic residues; the sequence is KAREFNRNQRKDSE. Residues Ser-59, Ser-335, and Ser-339 each carry the phosphoserine modification. Residues 356-377 show a composition bias toward basic and acidic residues; the sequence is KALIKQDNLDAFNERDPYKADD. Residues 378–391 show a composition bias toward acidic residues; the sequence is SREEEEENDDDNSL. Ser-788 carries the post-translational modification Phosphoserine. The tract at residues 796–837 is required for STRIPAK core complex formation; the sequence is DNCLQSVLGQRVDLPEDFQMNYDLWLEREVFSKPISWEELLQ.

This sequence belongs to the STRIP family. Part of the core of STRIPAK complexes composed of PP2A catalytic and scaffolding subunits, the striatins (PP2A regulatory subunits), the striatin-associated proteins MOB4, STRIP1 and STRIP2, PDCD10 and members of the STE20 kinases, such as STK24 and STK26. The STRIPAK complex can be extended by adapter proteins such as SLMAP:SIKE1, CTTNBP2 or CTTNBP2NL. Interacts with CDC42BPB. Interacts with CTTNBP2NL.

Its subcellular location is the cytoplasm. In terms of biological role, plays a role in the regulation of cell morphology and cytoskeletal organization. Required in the cortical actin filament dynamics and cell shape. Part of the striatin-interacting phosphatase and kinase (STRIPAK) complexes. STRIPAK complexes have critical roles in protein (de)phosphorylation and are regulators of multiple signaling pathways including Hippo, MAPK, nuclear receptor and cytoskeleton remodeling. Different types of STRIPAK complexes are involved in a variety of biological processes such as cell growth, differentiation, apoptosis, metabolism and immune regulation. In Homo sapiens (Human), this protein is Striatin-interacting protein 1.